We begin with the raw amino-acid sequence, 296 residues long: Undecaprenyl-diphosphatase (296 aa).

Helical transmembrane passes span 48-68 (SAFTFKIVIQLGSVFAAAWVF), 104-124 (LTLWHVLVGMIPAGILGLLFD), 131-151 (LFSVPTVMIGLLLGAFYMIFA), 167-187 (ITFFQAFVIGLSQAVAMWPGF), 208-228 (SDFTFIMAVPIMLAASLLSLV), 237-257 (SHIPFYIIGFLAAFIFGLLSI), and 272-292 (FAIYRIILVIFIAILYFGFGI).

The protein belongs to the UppP family.

The protein resides in the cell membrane. The enzyme catalyses di-trans,octa-cis-undecaprenyl diphosphate + H2O = di-trans,octa-cis-undecaprenyl phosphate + phosphate + H(+). In terms of biological role, catalyzes the dephosphorylation of undecaprenyl diphosphate (UPP). Confers resistance to bacitracin. The chain is Undecaprenyl-diphosphatase from Staphylococcus carnosus (strain TM300).